Reading from the N-terminus, the 165-residue chain is Phosphopantetheine adenylyltransferase (165 aa).

Thr9 provides a ligand contact to substrate. Residues 9-10 and His17 each bind ATP; that span reads TF. The substrate site is built by Lys41, Leu73, and Arg87. Residues 88–90, Glu98, and 123–129 contribute to the ATP site; these read GLR and YQFISGT.

The protein belongs to the bacterial CoaD family. In terms of assembly, homohexamer. Mg(2+) is required as a cofactor.

The protein localises to the cytoplasm. It catalyses the reaction (R)-4'-phosphopantetheine + ATP + H(+) = 3'-dephospho-CoA + diphosphate. Its pathway is cofactor biosynthesis; coenzyme A biosynthesis; CoA from (R)-pantothenate: step 4/5. Functionally, reversibly transfers an adenylyl group from ATP to 4'-phosphopantetheine, yielding dephospho-CoA (dPCoA) and pyrophosphate. In Polynucleobacter necessarius subsp. necessarius (strain STIR1), this protein is Phosphopantetheine adenylyltransferase.